Reading from the N-terminus, the 1028-residue chain is Sporulation-specific protein 3 (1028 aa).

The protein localises to the prospore membrane. Has a role in spore morphogenesis. Involved in the assembly of the forespore membrane. The chain is Sporulation-specific protein 3 (spo3) from Schizosaccharomyces pombe (strain 972 / ATCC 24843) (Fission yeast).